The following is a 666-amino-acid chain: Threonine--tRNA ligase (666 aa).

Residues 7–70 form the TGS domain; that stretch reads QQVTLTVTLP…TADCTAEIIT (64 aa). The catalytic stretch occupies residues 253-555; that stretch reads DHRKLGTELE…LIEHTAGNFP (303 aa). Zn(2+)-binding residues include Cys-351, His-402, and His-532.

The protein belongs to the class-II aminoacyl-tRNA synthetase family. As to quaternary structure, homodimer. Zn(2+) serves as cofactor.

The protein resides in the cytoplasm. It carries out the reaction tRNA(Thr) + L-threonine + ATP = L-threonyl-tRNA(Thr) + AMP + diphosphate + H(+). Its function is as follows. Catalyzes the attachment of threonine to tRNA(Thr) in a two-step reaction: L-threonine is first activated by ATP to form Thr-AMP and then transferred to the acceptor end of tRNA(Thr). Also edits incorrectly charged L-seryl-tRNA(Thr). The chain is Threonine--tRNA ligase from Chlorobium phaeovibrioides (strain DSM 265 / 1930) (Prosthecochloris vibrioformis (strain DSM 265)).